The following is a 509-amino-acid chain: Maturase K (509 aa).

It belongs to the intron maturase 2 family. MatK subfamily.

It localises to the plastid. The protein localises to the chloroplast. Functionally, usually encoded in the trnK tRNA gene intron. Probably assists in splicing its own and other chloroplast group II introns. This Galbulimima belgraveana (Northern pigeonberry ash) protein is Maturase K.